We begin with the raw amino-acid sequence, 200 residues long: dITP/XTP pyrophosphatase (200 aa).

A substrate-binding site is contributed by Thr-8–Lys-13. Asp-69 acts as the Proton acceptor in catalysis. Asp-69 is a Mg(2+) binding site. Substrate contacts are provided by residues Ser-70, Phe-154–Asp-157, Lys-177, and His-182–Arg-183.

It belongs to the HAM1 NTPase family. As to quaternary structure, homodimer. Mg(2+) is required as a cofactor.

It catalyses the reaction XTP + H2O = XMP + diphosphate + H(+). It carries out the reaction dITP + H2O = dIMP + diphosphate + H(+). The catalysed reaction is ITP + H2O = IMP + diphosphate + H(+). Pyrophosphatase that catalyzes the hydrolysis of nucleoside triphosphates to their monophosphate derivatives, with a high preference for the non-canonical purine nucleotides XTP (xanthosine triphosphate), dITP (deoxyinosine triphosphate) and ITP. Seems to function as a house-cleaning enzyme that removes non-canonical purine nucleotides from the nucleotide pool, thus preventing their incorporation into DNA/RNA and avoiding chromosomal lesions. In Vibrio parahaemolyticus serotype O3:K6 (strain RIMD 2210633), this protein is dITP/XTP pyrophosphatase.